A 55-amino-acid polypeptide reads, in one-letter code: Large ribosomal subunit protein bL32 (55 aa).

The segment covering 1 to 19 (MAVPKFKKSRANTRARRSQ) has biased composition (basic residues). The tract at residues 1-22 (MAVPKFKKSRANTRARRSQWKA) is disordered.

It belongs to the bacterial ribosomal protein bL32 family.

The chain is Large ribosomal subunit protein bL32 from Corynebacterium urealyticum (strain ATCC 43042 / DSM 7109).